The chain runs to 569 residues: Laccase-13 (569 aa).

An N-terminal signal peptide occupies residues 1-21; the sequence is MEQLRPFFLLLAIFVASLVNA. Plastocyanin-like domains follow at residues 29–145 and 157–308; these read VIQE…PPLS and REIT…YKDA. Asn-75 is a glycosylation site (N-linked (GlcNAc...) asparagine). His-79, His-81, His-124, and His-126 together coordinate Cu cation. N-linked (GlcNAc...) asparagine glycosylation is found at Asn-186, Asn-296, Asn-330, Asn-381, Asn-391, and Asn-432. The Plastocyanin-like 3 domain occupies 418–553; that stretch reads DFPPTPPVTF…AMVFLVENGE (136 aa). Positions 470, 473, 475, 532, 533, 534, and 538 each coordinate Cu cation.

It belongs to the multicopper oxidase family. It depends on Cu cation as a cofactor. In terms of tissue distribution, mostly expressed in roots. Also detected in leaves, stems and flowers but not in siliques.

It localises to the secreted. The protein localises to the extracellular space. It is found in the apoplast. It carries out the reaction 4 hydroquinone + O2 = 4 benzosemiquinone + 2 H2O. Its function is as follows. Lignin degradation and detoxification of lignin-derived products. The polypeptide is Laccase-13 (LAC13) (Arabidopsis thaliana (Mouse-ear cress)).